The following is a 478-amino-acid chain: Sphingomyelin synthase-related protein 1 (478 aa).

Residues 1-22 (MPAGSRAGSRLRSGSLPRPSRL) show a composition bias toward low complexity. Residues 1 to 65 (MPAGSRAGSR…TAEEVEKEMA (65 aa)) form a disordered region. The SAM domain maps to 75–141 (WTTKHVAVWL…MLSVRKLQKI (67 aa)). Helical transmembrane passes span 216 to 236 (ILSC…MVIV), 264 to 284 (FSMT…VLLL), 295 to 315 (LCSL…VTSL), 341 to 361 (AIWS…DYMF), 385 to 405 (FLHT…LAAH), and 410 to 430 (IDVF…HTLA). Over 431–478 (NTRAYHQSRRARIWFPMFSFFECNVNGTVPNEYCWPFSKPAIMKRLIG) the chain is Cytoplasmic.

Belongs to the sphingomyelin synthase family. As to expression, expressed ubiquitously with highest levels in macrophages and testis.

The protein localises to the endoplasmic reticulum membrane. The catalysed reaction is an N-acylsphing-4-enine + a 1,2-diacyl-sn-glycero-3-phosphoethanolamine = an N-acylsphing-4-enine 1-phosphoethanolamine + a 1,2-diacyl-sn-glycerol. The enzyme catalyses an N-acylsphinganine + a 1,2-diacyl-sn-glycero-3-phosphoethanolamine = an N-acylsphinganine-1-phosphoethanolamine + a 1,2-diacyl-sn-glycerol. It catalyses the reaction an N-acyl-(4R)-4-hydroxysphinganine + a 1,2-diacyl-sn-glycero-3-phosphoethanolamine = an N-acyl-(4R)-4-hydroxysphinganine-1-phosphoethanolamine + a 1,2-diacyl-sn-glycerol. It carries out the reaction N-hexadecanoylsphinganine + a 1,2-diacyl-sn-glycero-3-phosphoethanolamine = N-hexadecanoyl-sphinganine-1-phosphoethanolamine + a 1,2-diacyl-sn-glycerol. The catalysed reaction is N-hexadecanoyl-(4R)-hydroxysphinganine + a 1,2-diacyl-sn-glycero-3-phosphoethanolamine = N-hexadecanoyl-(4R)-hydroxysphinganine-1-phosphoethanolamine + a 1,2-diacyl-sn-glycerol. It participates in sphingolipid metabolism. Synthesizes sphingolipids through transfer of a phosphatidyl head group from a glycerophospholipid on to the primary hydroxyl of a ceramide in the lumen of the endoplasmic reticulum. Catalyzes the synthesis of ceramide phosphoethanolamines (CPEs) (such as N-acylsphing-4-enine 1-phosphoethanolamine) by transferring phosphoethanolamine head group, which is smaller and more hydrophilic than the phosphocholine (PC) headgroup transferred in the canonical sphingomyelin synthesis (SMS) reaction by SMS1 or SMS2, from a phosphatidylethanolamine (1,2-diacyl-sn-glycero-3-phosphoethanolamine, PE) to a ceramide (such as N-acylsphing-4-enine). The larger PC prevents an efficient fit in the enzyme's catalytic pocket, leading to little or no SMS activity. In vitro, in the absence of ceramide, it has PLC activity with preference for phosphatidylinositol and phosphatidic acid, but also hydrolyzes phosphatidylethanolamine. The protein is Sphingomyelin synthase-related protein 1 of Mus musculus (Mouse).